The chain runs to 225 residues: UPF0758 protein BAMEG_4721 (225 aa).

Positions 103-225 (SIRSPEDCAT…FVSLKEKGHI (123 aa)) constitute an MPN domain. Positions 174, 176, and 187 each coordinate Zn(2+). The short motif at 174-187 (HNHPSGDPAPSRED) is the JAMM motif element.

It belongs to the UPF0758 family.

This chain is UPF0758 protein BAMEG_4721, found in Bacillus anthracis (strain CDC 684 / NRRL 3495).